A 455-amino-acid polypeptide reads, in one-letter code: D-inositol 3-phosphate glycosyltransferase (455 aa).

Positions 1-25 are disordered; that stretch reads MSQHVSRLGGLRGRSHGHGAFGGPY. His45 provides a ligand contact to 1D-myo-inositol 3-phosphate. UDP-N-acetyl-alpha-D-glucosamine contacts are provided by residues 51–52 and Gly59; that span reads QP. Residues 56-61, Lys114, Tyr147, Thr171, and Arg191 contribute to the 1D-myo-inositol 3-phosphate site; that span reads DAGGMN. Residues Arg266 and Lys271 each contribute to the UDP-N-acetyl-alpha-D-glucosamine site. Mg(2+) is bound by residues Tyr341, Arg342, and Ala344. The UDP-N-acetyl-alpha-D-glucosamine site is built by Glu354 and Glu362. Position 368 (Thr368) interacts with Mg(2+).

This sequence belongs to the glycosyltransferase group 1 family. MshA subfamily. As to quaternary structure, homodimer.

The catalysed reaction is 1D-myo-inositol 3-phosphate + UDP-N-acetyl-alpha-D-glucosamine = 1D-myo-inositol 2-acetamido-2-deoxy-alpha-D-glucopyranoside 3-phosphate + UDP + H(+). In terms of biological role, catalyzes the transfer of a N-acetyl-glucosamine moiety to 1D-myo-inositol 3-phosphate to produce 1D-myo-inositol 2-acetamido-2-deoxy-glucopyranoside 3-phosphate in the mycothiol biosynthesis pathway. This is D-inositol 3-phosphate glycosyltransferase from Streptomyces bingchenggensis (strain BCW-1).